The primary structure comprises 247 residues: Segregation and condensation protein A (247 aa).

The protein belongs to the ScpA family. Component of a cohesin-like complex composed of ScpA, ScpB and the Smc homodimer, in which ScpA and ScpB bind to the head domain of Smc. The presence of the three proteins is required for the association of the complex with DNA.

It is found in the cytoplasm. Its function is as follows. Participates in chromosomal partition during cell division. May act via the formation of a condensin-like complex containing Smc and ScpB that pull DNA away from mid-cell into both cell halves. The polypeptide is Segregation and condensation protein A (Bacillus cereus (strain 03BB102)).